The sequence spans 348 residues: DnaJ homolog subfamily B member 5 (348 aa).

A J domain is found at 4–68; it reads DYYKILGIPS…KKRGLYDQYG (65 aa).

This is DnaJ homolog subfamily B member 5 (DNAJB5) from Bos taurus (Bovine).